Reading from the N-terminus, the 412-residue chain is Transforming growth factor beta-3 proprotein (412 aa).

The first 23 residues, 1 to 23 (MKMHLQRALVVLALLNLATVSLS), serve as a signal peptide directing secretion. N-linked (GlcNAc...) asparagine glycans are attached at residues Asn-74, Asn-135, and Asn-142. The Cell attachment site signature appears at 261–263 (RGD). At Gln-293 the chain carries N5-methylglutamine. 4 disulfides stabilise this stretch: Cys-307/Cys-316, Cys-315/Cys-378, Cys-344/Cys-409, and Cys-348/Cys-411.

Belongs to the TGF-beta family. In terms of assembly, interacts with ASPN. Latency-associated peptide: Homodimer; disulfide-linked. Latency-associated peptide: Interacts with Transforming growth factor beta-3 (TGF-beta-3) chain; interaction is non-covalent and maintains (TGF-beta-3) in a latent state. Latency-associated peptide: Interacts with LRRC32/GARP; leading to regulate activation of TGF-beta-3 and promote epithelial fusion during palate development. Latency-associated peptide: Interacts (via cell attachment site) with integrins, leading to release of the active TGF-beta-3. Transforming growth factor beta-3: Homodimer; disulfide-linked. Transforming growth factor beta-3: Interacts with TGF-beta receptors (TGFBR1 and TGFBR2), leading to signal transduction. In terms of processing, transforming growth factor beta-3 proprotein: The precursor proprotein is cleaved in the Golgi apparatus to form Transforming growth factor beta-3 (TGF-beta-3) and Latency-associated peptide (LAP) chains, which remain non-covalently linked, rendering TGF-beta-3 inactive. Post-translationally, methylated at Gln-293 by N6AMT1. Expressed in cardiomyocytes.

It localises to the secreted. Its subcellular location is the extracellular space. The protein resides in the extracellular matrix. In terms of biological role, transforming growth factor beta-3 proprotein: Precursor of the Latency-associated peptide (LAP) and Transforming growth factor beta-3 (TGF-beta-3) chains, which constitute the regulatory and active subunit of TGF-beta-3, respectively. Required to maintain the Transforming growth factor beta-3 (TGF-beta-3) chain in a latent state during storage in extracellular matrix. Associates non-covalently with TGF-beta-3 and regulates its activation via interaction with 'milieu molecules', such as LTBP1 and LRRC32/GARP, that control activation of TGF-beta-3. Interaction with integrins results in distortion of the Latency-associated peptide chain and subsequent release of the active TGF-beta-3. Functionally, transforming growth factor beta-3: Multifunctional protein that regulates embryogenesis and cell differentiation and is required in various processes such as secondary palate development. Activation into mature form follows different steps: following cleavage of the proprotein in the Golgi apparatus, Latency-associated peptide (LAP) and Transforming growth factor beta-3 (TGF-beta-3) chains remain non-covalently linked rendering TGF-beta-3 inactive during storage in extracellular matrix. At the same time, LAP chain interacts with 'milieu molecules', such as LTBP1 and LRRC32/GARP that control activation of TGF-beta-3 and maintain it in a latent state during storage in extracellular milieus. TGF-beta-3 is released from LAP by integrins: integrin-binding results in distortion of the LAP chain and subsequent release of the active TGF-beta-3. Once activated following release of LAP, TGF-beta-3 acts by binding to TGF-beta receptors (TGFBR1 and TGFBR2), which transduce signal. This chain is Transforming growth factor beta-3 proprotein (Tgfb3), found in Rattus norvegicus (Rat).